Reading from the N-terminus, the 327-residue chain is Tetraacyldisaccharide 4'-kinase (327 aa).

ATP is bound at residue 56-63 (FVGGTGKT).

This sequence belongs to the LpxK family.

It catalyses the reaction a lipid A disaccharide + ATP = a lipid IVA + ADP + H(+). The protein operates within glycolipid biosynthesis; lipid IV(A) biosynthesis; lipid IV(A) from (3R)-3-hydroxytetradecanoyl-[acyl-carrier-protein] and UDP-N-acetyl-alpha-D-glucosamine: step 6/6. In terms of biological role, transfers the gamma-phosphate of ATP to the 4'-position of a tetraacyldisaccharide 1-phosphate intermediate (termed DS-1-P) to form tetraacyldisaccharide 1,4'-bis-phosphate (lipid IVA). The sequence is that of Tetraacyldisaccharide 4'-kinase from Halorhodospira halophila (strain DSM 244 / SL1) (Ectothiorhodospira halophila (strain DSM 244 / SL1)).